We begin with the raw amino-acid sequence, 558 residues long: Ankyrin repeat protein OPG189 (558 aa).

7 ANK repeats span residues 65-95 (YGEN…NINK), 169-205 (YGCT…DVDK), 209-239 (HGNT…NIDS), 243-272 (NGYT…NVNT), 276-304 (FGTT…ELEI), 339-368 (YNET…DFET), and 372-401 (SGCT…SLKI).

Belongs to the orthopoxvirus OPG189 protein family.

Its function is as follows. Contributes to viral release without involving rearrangement of host actin. This chain is Ankyrin repeat protein OPG189 (OPG189), found in Homo sapiens (Human).